Reading from the N-terminus, the 193-residue chain is Xanthine phosphoribosyltransferase (193 aa).

Xanthine contacts are provided by L20 and T27. 128-132 (ANGQA) contributes to the 5-phospho-alpha-D-ribose 1-diphosphate binding site. K156 is a xanthine binding site.

This sequence belongs to the purine/pyrimidine phosphoribosyltransferase family. Xpt subfamily. As to quaternary structure, homodimer.

The protein resides in the cytoplasm. It catalyses the reaction XMP + diphosphate = xanthine + 5-phospho-alpha-D-ribose 1-diphosphate. The protein operates within purine metabolism; XMP biosynthesis via salvage pathway; XMP from xanthine: step 1/1. In terms of biological role, converts the preformed base xanthine, a product of nucleic acid breakdown, to xanthosine 5'-monophosphate (XMP), so it can be reused for RNA or DNA synthesis. This chain is Xanthine phosphoribosyltransferase, found in Streptococcus uberis (strain ATCC BAA-854 / 0140J).